The sequence spans 810 residues: RING finger protein unkempt homolog (810 aa).

Positions M1 to L24 are disordered. A compositionally biased stretch (low complexity) spans S10–A19. 5 C3H1-type zinc fingers span residues Y84–T113, Y124–H154, N215–K241, K251–T285, and I293–P321. The interval N239–E265 is disordered. S240 bears the Phosphoserine mark. Positions K241 to R253 are enriched in basic residues. A phosphoserine mark is found at S374, S378, S385, and S394. Residues T478–M497 are disordered. S631 is modified (phosphoserine). Positions G643–Q727 form a coiled coil. An RING-type; degenerate zinc finger spans residues S766–Q801.

This sequence belongs to the unkempt family.

The protein resides in the cytoplasm. Its function is as follows. Sequence-specific RNA-binding protein which plays an important role in the establishment and maintenance of the early morphology of cortical neurons during embryonic development. Acts as a translation repressor and controls a translationally regulated cell morphology program to ensure proper structuring of the nervous system. Translational control depends on recognition of its binding element within target mRNAs which consists of a mandatory UAG trimer upstream of a U/A-rich motif. Associated with polysomes. The protein is RING finger protein unkempt homolog (Unk) of Mus musculus (Mouse).